We begin with the raw amino-acid sequence, 364 residues long: FK506-binding protein 4 (364 aa).

Disordered stretches follow at residues 92–148 (SMFG…DDEI) and 168–239 (EADK…PTKP). A compositionally biased stretch (acidic residues) spans 94–148 (FGDDEHGEDEDNEEEEGEEGEDEEMEGEDEDEDEEDEDEEDEDEEEEDDEEDDEI). Basic and acidic residues predominate over residues 168-184 (EADKNKQQKKPKQEEPV). The span at 185–239 (KQVTPVKPTAQAAKPTAATTTTTTTTTTTPTKQTTPAKPAAKPVTPTKPVTPTKP) shows a compositional bias: low complexity. The region spanning 277–363 (GKKVGVKYIG…IFDVELVSCA (87 aa)) is the PPIase FKBP-type domain.

Belongs to the FKBP-type PPIase family. Binds to histones H3 and H4.

Its subcellular location is the nucleus. It carries out the reaction [protein]-peptidylproline (omega=180) = [protein]-peptidylproline (omega=0). With respect to regulation, inhibited by both FK506 and rapamycin. In terms of biological role, PPIase that acts as a histone chaperone. Histone proline isomerase that increases the rate of cis-trans isomerization at prolines on the histone H3 N-terminal tail. Proline isomerization influences H3 methylation thereby regulating gene expression. This Dictyostelium discoideum (Social amoeba) protein is FK506-binding protein 4 (fkbp4).